The chain runs to 120 residues: MFLLYEYDIFWAFLIISSVIPILAFFISGVLAPISKGPEKLSSYESGIEPMGDAWLQFRIRYYMFALVFVVFDVETVFLYPWAMSFDVLGVSVFIEALIFVLILIVGSVYAWRKGALEWS.

3 helical membrane-spanning segments follow: residues 9–29 (IFWA…FISG), 64–84 (MFAL…PWAM), and 88–108 (VLGV…IVGS).

The protein belongs to the complex I subunit 3 family. NDH is composed of at least 16 different subunits, 5 of which are encoded in the nucleus.

Its subcellular location is the plastid. The protein localises to the chloroplast thylakoid membrane. The catalysed reaction is a plastoquinone + NADH + (n+1) H(+)(in) = a plastoquinol + NAD(+) + n H(+)(out). The enzyme catalyses a plastoquinone + NADPH + (n+1) H(+)(in) = a plastoquinol + NADP(+) + n H(+)(out). NDH shuttles electrons from NAD(P)H:plastoquinone, via FMN and iron-sulfur (Fe-S) centers, to quinones in the photosynthetic chain and possibly in a chloroplast respiratory chain. The immediate electron acceptor for the enzyme in this species is believed to be plastoquinone. Couples the redox reaction to proton translocation, and thus conserves the redox energy in a proton gradient. This Vitis vinifera (Grape) protein is NAD(P)H-quinone oxidoreductase subunit 3, chloroplastic.